The chain runs to 164 residues: ATP synthase subunit b (164 aa).

The helical transmembrane segment at 4–24 (LGINPTLFIAQLINFLLLIFI) threads the bilayer.

It belongs to the ATPase B chain family. In terms of assembly, F-type ATPases have 2 components, F(1) - the catalytic core - and F(0) - the membrane proton channel. F(1) has five subunits: alpha(3), beta(3), gamma(1), delta(1), epsilon(1). F(0) has four main subunits: a(1), b(2) and c(10-14). The alpha and beta chains form an alternating ring which encloses part of the gamma chain. F(1) is attached to F(0) by a central stalk formed by the gamma and epsilon chains, while a peripheral stalk is formed by the delta and b chains.

The protein resides in the cell membrane. Its function is as follows. F(1)F(0) ATP synthase produces ATP from ADP in the presence of a proton or sodium gradient. F-type ATPases consist of two structural domains, F(1) containing the extramembraneous catalytic core and F(0) containing the membrane proton channel, linked together by a central stalk and a peripheral stalk. During catalysis, ATP synthesis in the catalytic domain of F(1) is coupled via a rotary mechanism of the central stalk subunits to proton translocation. Functionally, component of the F(0) channel, it forms part of the peripheral stalk, linking F(1) to F(0). This is ATP synthase subunit b from Chloroflexus aurantiacus (strain ATCC 29366 / DSM 635 / J-10-fl).